The primary structure comprises 47 residues: Snake venom metalloproteinase jararafibrase-4 (47 aa).

One can recognise a Peptidase M12B domain in the interval 6–47 (RYIELFLVVDHGMFMKYNGNSDKIYYYIHQMVNIMKXAYXYL). Glu9 is a binding site for Ca(2+).

Belongs to the venom metalloproteinase (M12B) family. In terms of assembly, monomer. Zn(2+) serves as cofactor. In terms of tissue distribution, expressed by the venom gland.

The protein localises to the secreted. Its activity is regulated as follows. Inhibited by 1,10-phenanthroline and EDTA. Its function is as follows. The metalloproteinase is a probable venom zinc protease that induces local hemorrhage in the skin of rats. Degrades type-IV collagen, gelatin, laminin and fibronectin. Has fibrinolytic activities. Has high hemagglutinating activity on red blood cells. Cleaves insulin B chain at 29-His-|-Leu-30, and 38-Ala-|-Leu-39 bonds. The polypeptide is Snake venom metalloproteinase jararafibrase-4 (Bothrops jararaca (Jararaca)).